The sequence spans 338 residues: Tetraacyldisaccharide 4'-kinase (338 aa).

61–68 (TLGGTGKT) lines the ATP pocket.

It belongs to the LpxK family.

The enzyme catalyses a lipid A disaccharide + ATP = a lipid IVA + ADP + H(+). It functions in the pathway glycolipid biosynthesis; lipid IV(A) biosynthesis; lipid IV(A) from (3R)-3-hydroxytetradecanoyl-[acyl-carrier-protein] and UDP-N-acetyl-alpha-D-glucosamine: step 6/6. Its function is as follows. Transfers the gamma-phosphate of ATP to the 4'-position of a tetraacyldisaccharide 1-phosphate intermediate (termed DS-1-P) to form tetraacyldisaccharide 1,4'-bis-phosphate (lipid IVA). This Nitrosococcus oceani (strain ATCC 19707 / BCRC 17464 / JCM 30415 / NCIMB 11848 / C-107) protein is Tetraacyldisaccharide 4'-kinase.